Consider the following 123-residue polypeptide: Methanesulfonate monooxygenase ferredoxin subunit (123 aa).

The region spanning 4 to 99 (TYLCDAADVA…LKEEDGKLLA (96 aa)) is the Rieske domain. [2Fe-2S] cluster is bound by residues cysteine 43, histidine 45, cysteine 63, and histidine 66.

It belongs to the bacterial ring-hydroxylating dioxygenase ferredoxin component family. The MSA monooxygenase system consists of 4 proteins: the 2 subunits of the hydroxylase component (MsmA and MsmB), a ferredoxin (MsmC) and a ferredoxin reductase (MsmD). The ferredoxin component is dimeric. The cofactor is [2Fe-2S] cluster.

It localises to the cytoplasm. It catalyses the reaction methanesulfonate + NADH + O2 = sulfite + formaldehyde + NAD(+) + H2O. With respect to regulation, MSAMO is inhibited by metal chelators (such as bathophenanthroline, bathocuprione, neocuprione, alpha-alpha-dipyridil and sodium EDTA) and by sodium azide, sodium arsenate and potassium cyanide. In terms of biological role, methanesulfonate monooxygenase (MSAMO) mediates the primary degradation of methanesulfonic acid (MSA) to produce formaldehyd and inorganic sulfite by initial hydroxylation of the carbon atom prior to spontaneous cleavage of the unstable hydroxymethanesulfonic acid. MSAMO has a restricted substrate range that includes only the short-chain aliphatic sulfonates (methane- to butanesulfonate) and excludes all larger molecules, such as arylsulfonates and aromatic sulfonates. All MSAMO components are required for enzyme activity. This is Methanesulfonate monooxygenase ferredoxin subunit from Methylosulfonomonas methylovora.